The chain runs to 252 residues: 5'-nucleotidase SurE (252 aa).

Asp-8, Asp-9, Ser-39, and Asn-91 together coordinate a divalent metal cation.

Belongs to the SurE nucleotidase family. It depends on a divalent metal cation as a cofactor.

The protein localises to the cytoplasm. It carries out the reaction a ribonucleoside 5'-phosphate + H2O = a ribonucleoside + phosphate. In terms of biological role, nucleotidase that shows phosphatase activity on nucleoside 5'-monophosphates. The polypeptide is 5'-nucleotidase SurE (Geobacter metallireducens (strain ATCC 53774 / DSM 7210 / GS-15)).